The following is a 518-amino-acid chain: Xylose import ATP-binding protein XylG (518 aa).

ABC transporter domains are found at residues 6 to 245 and 262 to 507; these read LQMN…VGRE and FEAR…LSHP. Position 38–45 (38–45) interacts with ATP; sequence GENGTGKS.

The protein belongs to the ABC transporter superfamily. Xylose importer (TC 3.A.1.2.4) family. The complex is composed of two ATP-binding proteins (XylG), two transmembrane proteins (XylH) and a solute-binding protein (XylF).

The protein resides in the cell inner membrane. It catalyses the reaction D-xylose(out) + ATP + H2O = D-xylose(in) + ADP + phosphate + H(+). Part of the ABC transporter complex XylFGH involved in xylose import. Responsible for energy coupling to the transport system. This Pseudomonas savastanoi pv. phaseolicola (strain 1448A / Race 6) (Pseudomonas syringae pv. phaseolicola (strain 1448A / Race 6)) protein is Xylose import ATP-binding protein XylG.